The sequence spans 215 residues: Glutathione S-transferase D4 (215 aa).

Residues Met-1–Asp-80 form the GST N-terminal domain. Residues Ser-9, His-50–Ile-52, and Glu-64–Arg-66 each bind glutathione. Residues Asp-86–Tyr-207 enclose the GST C-terminal domain.

The protein belongs to the GST superfamily. Delta family. In terms of assembly, homodimer.

The enzyme catalyses RX + glutathione = an S-substituted glutathione + a halide anion + H(+). Its function is as follows. Conjugation of reduced glutathione to a wide number of exogenous and endogenous hydrophobic electrophiles. May be involved in detoxification. This chain is Glutathione S-transferase D4, found in Drosophila melanogaster (Fruit fly).